The chain runs to 255 residues: Type III pantothenate kinase (255 aa).

6–13 (DVGNTHIV) serves as a coordination point for ATP. Residues Y100 and 107 to 110 (GADR) contribute to the substrate site. D109 acts as the Proton acceptor in catalysis. Residue D129 coordinates K(+). T132 is a binding site for ATP. T184 is a binding site for substrate.

This sequence belongs to the type III pantothenate kinase family. Homodimer. It depends on NH4(+) as a cofactor. The cofactor is K(+).

The protein localises to the cytoplasm. The catalysed reaction is (R)-pantothenate + ATP = (R)-4'-phosphopantothenate + ADP + H(+). It functions in the pathway cofactor biosynthesis; coenzyme A biosynthesis; CoA from (R)-pantothenate: step 1/5. Catalyzes the phosphorylation of pantothenate (Pan), the first step in CoA biosynthesis. This is Type III pantothenate kinase from Ruminiclostridium cellulolyticum (strain ATCC 35319 / DSM 5812 / JCM 6584 / H10) (Clostridium cellulolyticum).